The sequence spans 476 residues: Bifunctional protein HldE (476 aa).

The ribokinase stretch occupies residues 1–318 (MKVTLPEFER…ENAVRGRADT (318 aa)). 195-198 (NLSE) lines the ATP pocket. Asp264 is a catalytic residue. Residues 344-476 (MTNGVFDILH…IIKKIQKDSQ (133 aa)) are cytidylyltransferase.

In the N-terminal section; belongs to the carbohydrate kinase PfkB family. The protein in the C-terminal section; belongs to the cytidylyltransferase family. In terms of assembly, homodimer.

It catalyses the reaction D-glycero-beta-D-manno-heptose 7-phosphate + ATP = D-glycero-beta-D-manno-heptose 1,7-bisphosphate + ADP + H(+). The enzyme catalyses D-glycero-beta-D-manno-heptose 1-phosphate + ATP + H(+) = ADP-D-glycero-beta-D-manno-heptose + diphosphate. It functions in the pathway nucleotide-sugar biosynthesis; ADP-L-glycero-beta-D-manno-heptose biosynthesis; ADP-L-glycero-beta-D-manno-heptose from D-glycero-beta-D-manno-heptose 7-phosphate: step 1/4. It participates in nucleotide-sugar biosynthesis; ADP-L-glycero-beta-D-manno-heptose biosynthesis; ADP-L-glycero-beta-D-manno-heptose from D-glycero-beta-D-manno-heptose 7-phosphate: step 3/4. In terms of biological role, catalyzes the phosphorylation of D-glycero-D-manno-heptose 7-phosphate at the C-1 position to selectively form D-glycero-beta-D-manno-heptose-1,7-bisphosphate. Its function is as follows. Catalyzes the ADP transfer from ATP to D-glycero-beta-D-manno-heptose 1-phosphate, yielding ADP-D-glycero-beta-D-manno-heptose. The sequence is that of Bifunctional protein HldE from Enterobacter sp. (strain 638).